The primary structure comprises 158 residues: UPF0225 protein PSEEN1229 (158 aa).

This sequence belongs to the UPF0225 family.

The sequence is that of UPF0225 protein PSEEN1229 from Pseudomonas entomophila (strain L48).